We begin with the raw amino-acid sequence, 226 residues long: PKHD-type hydroxylase Sde_2812 (226 aa).

Residues 78 to 178 (KIFPPLFNCY…RLASFFWLQS (101 aa)) form the Fe2OG dioxygenase domain. The Fe cation site is built by His96, Asp98, and His159. A 2-oxoglutarate-binding site is contributed by Arg169.

It depends on Fe(2+) as a cofactor. L-ascorbate serves as cofactor.

This Saccharophagus degradans (strain 2-40 / ATCC 43961 / DSM 17024) protein is PKHD-type hydroxylase Sde_2812.